Reading from the N-terminus, the 148-residue chain is Aspartate carbamoyltransferase regulatory chain (148 aa).

The Zn(2+) site is built by Cys106, Cys111, Cys134, and Cys137.

It belongs to the PyrI family. Contains catalytic and regulatory chains. The cofactor is Zn(2+).

In terms of biological role, involved in allosteric regulation of aspartate carbamoyltransferase. The sequence is that of Aspartate carbamoyltransferase regulatory chain from Methanococcus maripaludis (strain C6 / ATCC BAA-1332).